The sequence spans 166 residues: T-cell surface glycoprotein CD3 zeta chain (166 aa).

A signal peptide spans 1–21 (MKWTALVIVAVLQTQFPVTAA). Residues 22-30 (QSFGLLDPK) are Extracellular-facing. A helical membrane pass occupies residues 31-51 (LCYLLDGILFIYGVIVTALFL). Residues 52–166 (RAKFSRSADA…ALHMQALPPR (115 aa)) lie on the Cytoplasmic side of the membrane. Phosphoserine is present on Ser58. 3 ITAM domains span residues 61–89 (APAY…LDRR), 100–128 (PQRK…EIGM), and 133–161 (QRRR…LHMQ). A phosphotyrosine mark is found at Tyr64, Tyr72, Tyr83, Tyr111, Tyr123, Tyr144, and Tyr155. Positions 126–156 (IGMKSDNQRRRGKGHDGVYQGLSTATKDTYD) are disordered.

It belongs to the CD3Z/FCER1G family. As to quaternary structure, the TCR-CD3 complex is composed of a CD3D/CD3E and a CD3G/CD3E heterodimers that preferentially associate with TCRalpha and TCRbeta, respectively, to form TCRalpha/CD3E/CD3G and TCRbeta/CD3G/CD3E trimers. In turn, the hexamer interacts with CD3Z homodimer to form the TCR-CD3 complex. Alternatively, TCRalpha and TCRbeta can be replaced by TCRgamma and TCRdelta. Interacts with SLA. Interacts with TRAT1. Interacts with DOCK2. Interacts with SLA2. Interacts with SHB. Interacts with ZAP70. Interacts (tyrosine phosphorylated) with SHC1 (via SH2 domain). Interacts with PTPRC. Interacts with CRK; this interaction regulates CD3Z phosphorylation. Interacts (on T cell side) with CD81, ICAM1 and CD9 at immunological synapses between antigen-presenting cells and T cells. Interacts with CD160. Interacts with LY6E. Interacts with LY6E. The signaling subunit of immunoglobulin gamma (IgG) Fc receptor complex. As a homodimer or a heterodimer with FCER1G, associates with the ligand binding subunit FCGR3A (via transmembrane domain); this interaction is a prerequisite for Fc receptor complex expression on the cell surface. Interacts with CD5. Phosphorylated on Tyr residues after T-cell receptor triggering by LCK in association with CD4/CD8.

Its subcellular location is the cell membrane. In terms of biological role, part of the TCR-CD3 complex present on T-lymphocyte cell surface that plays an essential role in adaptive immune response. When antigen presenting cells (APCs) activate T-cell receptor (TCR), TCR-mediated signals are transmitted across the cell membrane by the CD3 chains CD3D, CD3E, CD3G and CD3Z. All CD3 chains contain immunoreceptor tyrosine-based activation motifs (ITAMs) in their cytoplasmic domain. Upon TCR engagement, these motifs become phosphorylated by Src family protein tyrosine kinases LCK and FYN, resulting in the activation of downstream signaling pathways. CD3Z ITAMs phosphorylation creates multiple docking sites for the protein kinase ZAP70 leading to ZAP70 phosphorylation and its conversion into a catalytically active enzyme. Plays an important role in intrathymic T-cell differentiation. Additionally, participates in the activity-dependent synapse formation of retinal ganglion cells (RGCs) in both the retina and dorsal lateral geniculate nucleus (dLGN). The sequence is that of T-cell surface glycoprotein CD3 zeta chain (CD247) from Ovis aries (Sheep).